Here is a 235-residue protein sequence, read N- to C-terminus: Large ribosomal subunit protein uL1 (235 aa).

Belongs to the universal ribosomal protein uL1 family. In terms of assembly, part of the 50S ribosomal subunit.

Its function is as follows. Binds directly to 23S rRNA. The L1 stalk is quite mobile in the ribosome, and is involved in E site tRNA release. Protein L1 is also a translational repressor protein, it controls the translation of the L11 operon by binding to its mRNA. The protein is Large ribosomal subunit protein uL1 of Prochlorococcus marinus (strain NATL1A).